We begin with the raw amino-acid sequence, 149 residues long: Large-conductance mechanosensitive channel (149 aa).

2 helical membrane passes run 14 to 34 (VVDMAVGIIVGGAFGKLVNTL) and 85 to 105 (GLFINAMISFIIMAFAVYLLV).

It belongs to the MscL family. Homopentamer.

Its subcellular location is the cell inner membrane. Its function is as follows. Channel that opens in response to stretch forces in the membrane lipid bilayer. May participate in the regulation of osmotic pressure changes within the cell. In Chlorobium phaeovibrioides (strain DSM 265 / 1930) (Prosthecochloris vibrioformis (strain DSM 265)), this protein is Large-conductance mechanosensitive channel.